The chain runs to 199 residues: Cytochrome c oxidase assembly protein CtaG (199 aa).

Residues 1-12 are Cytoplasmic-facing; sequence MTNTPQTPPKER. A helical; Signal-anchor for type II membrane protein transmembrane segment spans residues 13–35; sequence ANGVIVGACLAFVAGMVGMAYAA. Topologically, residues 36–199 are periplasmic; it reads VPLYDMFCRV…VKDGETENRL (164 aa).

Belongs to the COX11/CtaG family.

It is found in the cell inner membrane. In terms of biological role, exerts its effect at some terminal stage of cytochrome c oxidase synthesis, probably by being involved in the insertion of the copper B into subunit I. This Sinorhizobium fredii (strain NBRC 101917 / NGR234) protein is Cytochrome c oxidase assembly protein CtaG.